Reading from the N-terminus, the 76-residue chain is Protein OPG128 (76 aa).

Cysteine 17 and cysteine 21 are disulfide-bonded.

The protein belongs to the orthopoxvirus OPG128 family. In terms of assembly, interacts with sulfhydryl oxidase OPG072; this interaction involves formation of a transient disulfide-bonded intermediate, allowing disulfide bond transfer. Interacts with OPG088; this interaction involves formation of a transient disulfide-bonded intermediate, allowing disulfide bond transfer.

In terms of biological role, late protein which probably participates in disulfide bond formation by functioning as a thiol-disulfide transfer protein between membrane-associated OPG072 and OPG08. The complete pathway for formation of disulfide bonds in intracellular virion membrane proteins sequentially involves oxidation of OPG072, OPG128 and OPG08. In Bos taurus (Bovine), this protein is Protein OPG128 (OPG128).